We begin with the raw amino-acid sequence, 211 residues long: Endoplasmic reticulum vesicle protein 25 (211 aa).

The first 19 residues, 1–19, serve as a signal peptide directing secretion; the sequence is MKSIVSVLTLLLLINAVAA. The Lumenal portion of the chain corresponds to 20 to 180; it reads LRFVLPAKDK…TNESTNRRVK (161 aa). In terms of domain architecture, GOLD spans 33-121; it reads PFCVRDFVKN…TKEIDLSVAI (89 aa). A helical membrane pass occupies residues 181-201; that stretch reads FFSVGITLALIALGVWQIIYL. The Cytoplasmic portion of the chain corresponds to 202-211; sequence RSYFRSKHII.

It belongs to the EMP24/GP25L family.

The protein localises to the endoplasmic reticulum membrane. Its subcellular location is the golgi apparatus membrane. In terms of biological role, constituent of COPII-coated endoplasmic reticulum-derived transport vesicles. Required for efficient transport of a subset of secretory proteins to the Golgi. Facilitates retrograde transport from the Golgi to the endoplasmic reticulum. This chain is Endoplasmic reticulum vesicle protein 25 (ERV25), found in Yarrowia lipolytica (strain CLIB 122 / E 150) (Yeast).